A 705-amino-acid polypeptide reads, in one-letter code: Probable cyclic nucleotide-gated ion channel 16 (705 aa).

The Cytoplasmic segment spans residues 1 to 57 (MSNLHLYTSARFRNFPTTFSLRHHHNDPNNQRRRSIFSKLRDKTLDPGGDLITRWNH). A helical transmembrane segment spans residues 58–78 (IFLITCLLALFLDPLYFYLPI). The Extracellular segment spans residues 79-91 (VQAGTACMSIDVR). The helical transmembrane segment at 92 to 112 (FGIFVTCFRNLADLSFLIHIL) threads the bilayer. Topologically, residues 113 to 147 (LKFKTAFVSKSSRVFGRGELVMDRREIAIRYLKSE) are cytoplasmic. The helical transmembrane segment at 148 to 168 (FVIDLAATLPLPQIMIWFVIP) threads the bilayer. At 169 to 180 (NAGEFRYAAHQN) the chain is on the extracellular side. Residues 181–201 (HTLSLIVLIQYVPRFLVMLPL) traverse the membrane as a helical segment. Topologically, residues 202-222 (NRRIIKATGVAAKTAWSGAAY) are cytoplasmic. The chain crosses the membrane as a helical span at residues 223–243 (NLILYLLVSHVLGSVWYVLSI). The Extracellular segment spans residues 244-353 (QRQHECWRRE…LAASTLSSET (110 aa)). A helical transmembrane segment spans residues 354-374 (IFSCFICVAGLVFFSHLIGNV). At 375–705 (QNYLQSTTAR…MFKPEDPGFF (331 aa)) the chain is on the cytoplasmic side. Residues 457 to 580 (FFAQ…HSKK) and E528 each bind a nucleoside 3',5'-cyclic phosphate. Residues 573–588 (FRRLHSKKLQHAFRYY) form a calmodulin-binding region. One can recognise an IQ domain in the interval 593–622 (RAWGTCFIQAAWRRYMKRKLAMELARQEEE). Disordered stretches follow at residues 636 to 655 (EEDM…SNNQ) and 672 to 705 (RGVL…PGFF). Residues 642–655 (SNNNNGDENSSNNQ) show a composition bias toward low complexity.

Belongs to the cyclic nucleotide-gated cation channel (TC 1.A.1.5) family. As to quaternary structure, homotetramer or heterotetramer.

The protein localises to the cell membrane. Functionally, putative cyclic nucleotide-gated ion channel. The chain is Probable cyclic nucleotide-gated ion channel 16 (CNGC16) from Arabidopsis thaliana (Mouse-ear cress).